Here is a 165-residue protein sequence, read N- to C-terminus: Peptidyl-prolyl cis-trans isomerase-like 1 (165 aa).

The PPIase cyclophilin-type domain occupies 3–157 (EREEVILDTS…IVQKILYALN (155 aa)).

This sequence belongs to the cyclophilin-type PPIase family. PPIL1 subfamily.

It carries out the reaction [protein]-peptidylproline (omega=180) = [protein]-peptidylproline (omega=0). Functionally, PPIases accelerate the folding of proteins. It catalyzes the cis-trans isomerization of proline imidic peptide bonds in oligopeptides. The sequence is that of Peptidyl-prolyl cis-trans isomerase-like 1 (cyp3) from Rhizopus delemar (strain RA 99-880 / ATCC MYA-4621 / FGSC 9543 / NRRL 43880) (Mucormycosis agent).